The sequence spans 98 residues: Cystatin-B (98 aa).

Residue Met-1 is modified to N-acetylmethionine. The Secondary area of contact motif lies at 46 to 50 (QLVAG).

The protein belongs to the cystatin family. As to quaternary structure, able to form dimers stabilized by noncovalent forces.

It is found in the cytoplasm. This is an intracellular thiol proteinase inhibitor. This chain is Cystatin-B (CSTB), found in Bos taurus (Bovine).